Here is a 69-residue protein sequence, read N- to C-terminus: MKKIMLFLAMTSILSACQPNYTGKYIEIGDTLTDYTKECFKENEIPYKYEKGKLYIPEDAFDTAIYTCS.

Residues 1–16 form the signal peptide; the sequence is MKKIMLFLAMTSILSA. The N-palmitoyl cysteine moiety is linked to residue Cys-17. A lipid anchor (S-diacylglycerol cysteine) is attached at Cys-17.

It is found in the cell membrane. This is an uncharacterized protein from Bacillus subtilis (strain 168).